A 638-amino-acid polypeptide reads, in one-letter code: Gamma-aminobutyric acid receptor subunit theta (638 aa).

The signal sequence occupies residues 1-21 (MGIRGMLRAAALLLLIRTWLA). Residues 22–267 (ESNGPSPTPK…FQVQREVRSY (246 aa)) lie on the Extracellular side of the membrane. N-linked (GlcNAc...) asparagine glycosylation is present at N127. An intrachain disulfide couples C183 to C197. A helical membrane pass occupies residues 268 to 288 (LVQVYWPTVLTTILSWISFWM). The Cytoplasmic segment spans residues 289–296 (NYDSSAAR). Residues 297–314 (VTIGLTSILVLTTIDSHM) form a helical membrane-spanning segment. Over 315–325 (RDKLPHISCIK) the chain is Extracellular. A helical transmembrane segment spans residues 326-346 (AIDIYILVCLFFVFLSLLEYV). Over 347–617 (YINYLFFSQV…NRVPKVDRWS (271 aa)) the chain is Cytoplasmic. Positions 491 to 515 (ACDDEDSEESLSSEESHGHGSSHTG) are disordered. Acidic residues predominate over residues 492-502 (CDDEDSEESLS). Residues 618–638 (RFLFPLSFGLFNVVYWLYHVY) traverse the membrane as a helical segment.

Belongs to the ligand-gated ion channel (TC 1.A.9) family. Gamma-aminobutyric acid receptor (TC 1.A.9.5) subfamily. GABRQ sub-subfamily. As to quaternary structure, heteropentamer, formed by a combination of alpha (GABRA1-6), beta (GABRB1-3), gamma (GABRG1-3), delta (GABRD), epsilon (GABRE), rho (GABRR1-3), pi (GABRP) and theta (GABRQ) chains, each subunit exhibiting distinct physiological and pharmacological properties. As to expression, expressed in brain, lung, and spleen.

It is found in the postsynaptic cell membrane. The protein localises to the cell membrane. The catalysed reaction is chloride(in) = chloride(out). With respect to regulation, potentiated by etomidate, propofol, pregnanolone and pentobarbital. Its function is as follows. Theta subunit of the heteropentameric ligand-gated chloride channel gated by gamma-aminobutyric acid (GABA), a major inhibitory neurotransmitter in the brain. GABA-gated chloride channels, also named GABA(A) receptors (GABAAR), consist of five subunits arranged around a central pore and contain GABA active binding site(s) located at the alpha and beta subunit interfaces. When activated by GABA, GABAARs selectively allow the flow of chloride anions across the cell membrane down their electrochemical gradient. The chain is Gamma-aminobutyric acid receptor subunit theta from Mus musculus (Mouse).